The primary structure comprises 321 residues: Mitochondrial coenzyme A transporter SLC25A42 (321 aa).

3 Solcar repeats span residues 33 to 119 (RSVL…YKGI), 131 to 216 (LPPV…LKKT), and 226 to 314 (PFPY…TQIL). Helical transmembrane passes span 35–55 (VLNS…AVAP), 91–111 (LWRG…IQFC), 137–154 (LLAG…TYPL), 191–208 (GFTP…LSFF), 232–252 (LVFG…LDVV), and 295–315 (VKGP…QILL).

The protein belongs to the mitochondrial carrier (TC 2.A.29) family.

It is found in the mitochondrion inner membrane. It carries out the reaction ADP(out) + CoA(in) = ADP(in) + CoA(out). The catalysed reaction is 3'-dephospho-CoA(in) + ADP(out) = 3'-dephospho-CoA(out) + ADP(in). The enzyme catalyses adenosine 3',5'-bisphosphate(in) + ADP(out) = adenosine 3',5'-bisphosphate(out) + ADP(in). It catalyses the reaction AMP(in) + ADP(out) = AMP(out) + ADP(in). It carries out the reaction dADP(in) + ADP(out) = dADP(out) + ADP(in). The catalysed reaction is ADP(in) + ATP(out) = ADP(out) + ATP(in). Functionally, mitochondrial carrier mediating the transport of coenzyme A (CoA) in mitochondria in exchange for intramitochondrial (deoxy)adenine nucleotides and adenosine 3',5'-diphosphate. The chain is Mitochondrial coenzyme A transporter SLC25A42 (slc25a42) from Danio rerio (Zebrafish).